A 447-amino-acid polypeptide reads, in one-letter code: Glutamate--tRNA ligase 2 (447 aa).

Residues 8–18 (PSPTGYLHVGN) carry the 'HIGH' region motif. The 'KMSKS' region motif lies at 239-243 (KLSKR). Lys242 contributes to the ATP binding site.

Belongs to the class-I aminoacyl-tRNA synthetase family. Glutamate--tRNA ligase type 1 subfamily. In terms of assembly, monomer.

Its subcellular location is the cytoplasm. It carries out the reaction tRNA(Glu) + L-glutamate + ATP = L-glutamyl-tRNA(Glu) + AMP + diphosphate. Functionally, catalyzes the attachment of glutamate to tRNA(Glu) in a two-step reaction: glutamate is first activated by ATP to form Glu-AMP and then transferred to the acceptor end of tRNA(Glu). The sequence is that of Glutamate--tRNA ligase 2 from Granulibacter bethesdensis (strain ATCC BAA-1260 / CGDNIH1).